Consider the following 54-residue polypeptide: UPF0391 membrane protein msr3702 (54 aa).

The next 2 helical transmembrane spans lie at 4 to 24 (WALV…GGIA) and 30 to 50 (IAQI…LAGL).

The protein belongs to the UPF0391 family.

It localises to the cell membrane. This Mesorhizobium japonicum (strain LMG 29417 / CECT 9101 / MAFF 303099) (Mesorhizobium loti (strain MAFF 303099)) protein is UPF0391 membrane protein msr3702.